The sequence spans 148 residues: UPF0756 membrane protein CKO_01811 (148 aa).

4 consecutive transmembrane segments (helical) span residues 14-34 (ALGF…LIIV), 51-71 (LTVG…SGSL), 86-106 (LVAI…VTLM), and 121-141 (VLGV…AGLV).

Belongs to the UPF0756 family.

Its subcellular location is the cell membrane. This is UPF0756 membrane protein CKO_01811 from Citrobacter koseri (strain ATCC BAA-895 / CDC 4225-83 / SGSC4696).